Consider the following 183-residue polypeptide: TATA-box-binding protein (183 aa).

Repeat copies occupy residues 8-84 (VENI…VDKI) and 99-175 (IQNI…KERL).

Belongs to the TBP family.

Its function is as follows. General factor that plays a role in the activation of archaeal genes transcribed by RNA polymerase. Binds specifically to the TATA box promoter element which lies close to the position of transcription initiation. The polypeptide is TATA-box-binding protein (Methanosphaera stadtmanae (strain ATCC 43021 / DSM 3091 / JCM 11832 / MCB-3)).